We begin with the raw amino-acid sequence, 615 residues long: Zinc metalloproteinase-disintegrin-like (615 aa).

The first 20 residues, 1–20 (MIQALLVTICLVGFPHQGSS), serve as a signal peptide directing secretion. A propeptide spanning residues 21–195 (IILESGNVKD…KMNFQSANNP (175 aa)) is cleaved from the precursor. Residues 204–400 (KYIKLAVVVD…DLPQCILNKP (197 aa)) form the Peptidase M12B domain. 3 cysteine pairs are disulfide-bonded: cysteine 315–cysteine 395, cysteine 355–cysteine 379, and cysteine 357–cysteine 362. Zn(2+) is bound at residue histidine 340. The active site involves glutamate 341. The Zn(2+) site is built by histidine 344 and histidine 350. Residues 408–494 (PAVCGNNFVE…DCPMDGLQRN (87 aa)) form the Disintegrin domain. Residues valine 410, asparagine 413, phenylalanine 415, glutamate 417, and aspartate 423 each coordinate Ca(2+). 14 disulfide bridges follow: cysteine 411-cysteine 440, cysteine 422-cysteine 435, cysteine 424-cysteine 430, cysteine 434-cysteine 457, cysteine 448-cysteine 454, cysteine 453-cysteine 479, cysteine 466-cysteine 486, cysteine 473-cysteine 505, cysteine 498-cysteine 510, cysteine 517-cysteine 567, cysteine 532-cysteine 576, cysteine 545-cysteine 555, cysteine 562-cysteine 602, and cysteine 596-cysteine 608. The short motif at 472–474 (DCD) is the D/ECD-tripeptide element.

It belongs to the venom metalloproteinase (M12B) family. P-III subfamily. P-IIIa sub-subfamily. In terms of assembly, monomer. It depends on Zn(2+) as a cofactor. As to expression, expressed by the venom gland.

Its subcellular location is the secreted. Functionally, snake venom zinc metalloprotease that may induce platelet aggregation. The polypeptide is Zinc metalloproteinase-disintegrin-like (Cerberus rynchops (Dog-faced water snake)).